The sequence spans 362 residues: Phosphoserine aminotransferase (362 aa).

Residues Ser9 and Arg42 each contribute to the L-glutamate site. Residues 76 to 77, Trp102, Thr153, Asp174, and Gln197 contribute to the pyridoxal 5'-phosphate site; that span reads GR. The residue at position 198 (Lys198) is an N6-(pyridoxal phosphate)lysine. Residue 239–240 coordinates pyridoxal 5'-phosphate; the sequence is NT.

This sequence belongs to the class-V pyridoxal-phosphate-dependent aminotransferase family. SerC subfamily. Homodimer. Pyridoxal 5'-phosphate serves as cofactor.

The protein resides in the cytoplasm. The catalysed reaction is O-phospho-L-serine + 2-oxoglutarate = 3-phosphooxypyruvate + L-glutamate. The enzyme catalyses 4-(phosphooxy)-L-threonine + 2-oxoglutarate = (R)-3-hydroxy-2-oxo-4-phosphooxybutanoate + L-glutamate. Its pathway is amino-acid biosynthesis; L-serine biosynthesis; L-serine from 3-phospho-D-glycerate: step 2/3. It functions in the pathway cofactor biosynthesis; pyridoxine 5'-phosphate biosynthesis; pyridoxine 5'-phosphate from D-erythrose 4-phosphate: step 3/5. In terms of biological role, catalyzes the reversible conversion of 3-phosphohydroxypyruvate to phosphoserine and of 3-hydroxy-2-oxo-4-phosphonooxybutanoate to phosphohydroxythreonine. This chain is Phosphoserine aminotransferase, found in Salmonella choleraesuis (strain SC-B67).